The following is a 386-amino-acid chain: Formate-dependent phosphoribosylglycinamide formyltransferase (386 aa).

Residues 10-11 and Glu70 contribute to the N(1)-(5-phospho-beta-D-ribosyl)glycinamide site; that span reads EL. Residues Arg102, Lys143, 148 to 153, 183 to 186, and Glu191 contribute to the ATP site; these read SSGKGQ and EAFV. The 192-residue stretch at 107–298 folds into the ATP-grasp domain; the sequence is DLAAKELGLK…EFELHLRAIL (192 aa). Glu256 and Glu268 together coordinate Mg(2+). Residues Asp275, Lys346, and 353–354 each bind N(1)-(5-phospho-beta-D-ribosyl)glycinamide; that span reads RR.

The protein belongs to the PurK/PurT family. Homodimer.

It catalyses the reaction N(1)-(5-phospho-beta-D-ribosyl)glycinamide + formate + ATP = N(2)-formyl-N(1)-(5-phospho-beta-D-ribosyl)glycinamide + ADP + phosphate + H(+). The protein operates within purine metabolism; IMP biosynthesis via de novo pathway; N(2)-formyl-N(1)-(5-phospho-D-ribosyl)glycinamide from N(1)-(5-phospho-D-ribosyl)glycinamide (formate route): step 1/1. Its function is as follows. Involved in the de novo purine biosynthesis. Catalyzes the transfer of formate to 5-phospho-ribosyl-glycinamide (GAR), producing 5-phospho-ribosyl-N-formylglycinamide (FGAR). Formate is provided by PurU via hydrolysis of 10-formyl-tetrahydrofolate. This chain is Formate-dependent phosphoribosylglycinamide formyltransferase, found in Flavobacterium psychrophilum (strain ATCC 49511 / DSM 21280 / CIP 103535 / JIP02/86).